An 821-amino-acid chain; its full sequence is Calpain-3 (821 aa).

A disordered region spans residues 7-37 (ASVAPRTAAEPRSPGPVPHPAQSKATEAGGG). Positions 74–417 (LYVDPEFPPD…FTKLEICNLT (344 aa)) constitute a Calpain catalytic domain. Active-site residues include C129, H334, and N358. Residues 418-586 (ADALQSDKLQ…KRNLSEEVEN (169 aa)) form a domain III region. Residues 587–649 (TISVDRPVKK…QPGSSDQESE (63 aa)) form a linker region. The interval 609-652 (ANSNKELGVDQESEEGKGKTSPDKQKQSPQPQPGSSDQESEEQQ) is disordered. Basic and acidic residues predominate over residues 622 to 634 (EEGKGKTSPDKQK). Over residues 635-645 (QSPQPQPGSSD) the composition is skewed to low complexity. EF-hand domains lie at 649-683 (EEQQ…VVNK), 692-725 (FTLE…NKIK), 722-757 (NKIK…AGFH), and 787-821 (VRLE…TMYA). Residues 650–821 (EQQQFRNIFK…LEWLQLTMYA (172 aa)) are domain IV. A662, D665, E667, E672, D705, D707, S709, K711, E716, D735, D737, S739, T741, E746, D800, D802, D804, and I806 together coordinate Ca(2+).

The protein belongs to the peptidase C2 family. In terms of assembly, homodimer; via EF-hand domain 4. Interacts with TTN/titin. Interacts with CMYA5; this interaction, which results in CMYA5 proteolysis, may protect CAPN3 from autolysis. Interacts with SIMC1. Interacts with UTP25; the interaction is required for CAPN3 translocation to the nucleolus. As to expression, isoform I is skeletal muscle specific.

The protein localises to the cytoplasm. It localises to the nucleus. It is found in the nucleolus. It carries out the reaction Broad endopeptidase activity.. Activated by micromolar concentrations of calcium and inhibited by calpastatin. Functionally, calcium-regulated non-lysosomal thiol-protease. Proteolytically cleaves CTBP1 at 'His-409'. Mediates, with UTP25, the proteasome-independent degradation of p53/TP53. In Homo sapiens (Human), this protein is Calpain-3.